The primary structure comprises 476 residues: Serine--tRNA ligase (476 aa).

279–281 (TAE) contributes to the L-serine binding site. 310–312 (RAE) contacts ATP. Residue glutamate 333 participates in L-serine binding. 400–403 (EISS) provides a ligand contact to ATP. Residue serine 435 coordinates L-serine.

Belongs to the class-II aminoacyl-tRNA synthetase family. Type-1 seryl-tRNA synthetase subfamily. In terms of assembly, homodimer. The tRNA molecule binds across the dimer.

Its subcellular location is the cytoplasm. The enzyme catalyses tRNA(Ser) + L-serine + ATP = L-seryl-tRNA(Ser) + AMP + diphosphate + H(+). It carries out the reaction tRNA(Sec) + L-serine + ATP = L-seryl-tRNA(Sec) + AMP + diphosphate + H(+). It participates in aminoacyl-tRNA biosynthesis; selenocysteinyl-tRNA(Sec) biosynthesis; L-seryl-tRNA(Sec) from L-serine and tRNA(Sec): step 1/1. Its function is as follows. Catalyzes the attachment of serine to tRNA(Ser). Is also able to aminoacylate tRNA(Sec) with serine, to form the misacylated tRNA L-seryl-tRNA(Sec), which will be further converted into selenocysteinyl-tRNA(Sec). The protein is Serine--tRNA ligase of Rhodopseudomonas palustris (strain BisA53).